We begin with the raw amino-acid sequence, 947 residues long: Zinc finger protein 268 (947 aa).

One can recognise a KRAB domain in the interval 81-152; sequence LSFMDVFVDF…QAQVPNQTCP (72 aa). Ser-178 bears the Phosphoserine; by TBK1 mark. C2H2-type zinc fingers lie at residues 276–298, 304–326, 332–354, 360–382, 388–410, 416–438, 444–466, 472–494, 500–522, 528–550, 556–578, 584–606, 612–634, 640–662, 668–690, 696–718, 724–746, 752–774, 780–802, 808–830, 836–858, 864–886, 892–914, and 920–942; these read FGCSCCEKAFSSKSYLLVHQQTH, YGCNECGKDFSSKSYLIVHQRIH, HECSECRKTFSFHSQLVIHQRIH, YECCECGKVFSRKDQLVSHQKTH, YVCNECGKAFGLKSQLIIHERIH, YECNECQKAFNTKSNLMVHQRTH, YVCSDCGKAFTFKSQLIVHQGIH, YGCIQCGKGFSLKSQLIVHQRSH, YVCNECGKAFRSKSYLIIHTRTH, HECNNCGKAFSFKSQLIIHQRIH, YECHECGKAFSRKYQLISHQRTH, YECTDCGKAFGLKSQLIIHQRTH, FECSECQKAFNTKSNLIVHQRTH, YSCNECGKAFTFKSQLIVHKGVH, YGCSQCAKTFSLKSQLIVHQRSH, YGCSECGKAFRSKSYLIIHMRTH, HECRECGKSFSFNSQLIVHQRIH, YECSECGKAFNRKDQLISHQRTH, YGCSECGKAFSSKSYLIIHMRTH, YECNECGKAFIWKSLLIVHERTH, YKCSQCEKSFSGKLRLLVHQRMH, YECSECGKAFIRNSQLIVHQRTH, YGCNECGKTFSQKSILSAHQRTH, and CKCTECGKAFCWKSQLIMHQRTH.

This sequence belongs to the krueppel C2H2-type zinc-finger protein family. Interacts (via the KRAB domain) with TRIM28 (via the RBCC domain); the interaction increases ZNF268 nuclear localization activity. Isoform 2 interacts with CHUK and IKBKB; the interaction is further increased in a TNF-alpha-dependent manner. Interacts with TOLLIP; this interaction is impaired by ZNF268 phosphorylation at Ser-178. Forms a ternary complex with TBK1 and SETD4; the interaction between SETD4 and TBK1 is ZNF268-dependent and leads to TBK1 monomethylation. Phosphorylation at Ser-178 stabilizes the protein by interfering with its binding to TOLLIP, hence impairing its degradation by Tollip-mediated selective autophagy system. Overexpressed in ovarian cancer tissues compared to normal ovarian tissues. Isoform 1 and isoform 2 are expressed in squamous epithelium tissues. Isoform 2 is overexpressed in squamous cervical cancer (at protein level). Expressed in blood cells. Isoform 1 is expressed in pancreas, lung, skeletal muscle, heart, placenta, liver, kidney and brain. Isoform 2 expressed in chronic lymphocytic leukemia (CLL) and several tumor cell lines. Isoform 3 is expressed in several tumor cells. Isoform 5 is expressed in fetal liver and several tumor cells. Isoform 6 is weakly expressed in brain, lung amd small intestin and in several tumor cells. Isoform 7 is expressed in fetal liver and several tumor cells.

Its subcellular location is the nucleus. The protein localises to the cytoplasm. Acts as a transcriptional repressor. Inhibits erythroid differentiation and tumor cell proliferation. Plays a role during ovarian cancer development and progression. In terms of biological role, contributes to cervical carcinogenesis in part through the TNF-alpha-induced NF-kappa-B signaling pathway by interacting with the I-kappa-B-kinase (IKK) core complex. Its function is as follows. Involved in the regulation of antiviral interferon signaling. During viral infection, recruits SETD4 to TBK1, leading to TBK1 monomethylation, which is critical for the assembly of TBK1 complex and IRF3 signaling. The polypeptide is Zinc finger protein 268 (ZNF268) (Homo sapiens (Human)).